The following is a 139-amino-acid chain: Putative nickel-responsive regulator (139 aa).

Residues His-79, His-90, His-92, and Cys-98 each contribute to the Ni(2+) site.

Belongs to the transcriptional regulatory CopG/NikR family. It depends on Ni(2+) as a cofactor.

In terms of biological role, transcriptional regulator. The protein is Putative nickel-responsive regulator of Lawsonia intracellularis (strain PHE/MN1-00).